Consider the following 206-residue polypeptide: Small ribosomal subunit protein uS4 (206 aa).

Residues 98–163 form the S4 RNA-binding domain; that stretch reads MRLDNVVYRL…SEKFKTFVEN (66 aa).

It belongs to the universal ribosomal protein uS4 family. Part of the 30S ribosomal subunit. Contacts protein S5. The interaction surface between S4 and S5 is involved in control of translational fidelity.

Its function is as follows. One of the primary rRNA binding proteins, it binds directly to 16S rRNA where it nucleates assembly of the body of the 30S subunit. With S5 and S12 plays an important role in translational accuracy. This is Small ribosomal subunit protein uS4 from Clostridium botulinum (strain Alaska E43 / Type E3).